A 141-amino-acid chain; its full sequence is HTH-type transcriptional repressor NsrR (141 aa).

Positions 2–129 (QLTNFTDYGL…DNYTLADLVE (128 aa)) constitute an HTH rrf2-type domain. Residues 28–51 (ISEVTDVYGVSRNHMVKIINQLSR) constitute a DNA-binding region (H-T-H motif). [2Fe-2S] cluster-binding residues include C91, C96, and C102.

[2Fe-2S] cluster is required as a cofactor.

In terms of biological role, nitric oxide-sensitive repressor of genes involved in protecting the cell against nitrosative stress. May require iron for activity. This is HTH-type transcriptional repressor NsrR from Shigella boydii serotype 18 (strain CDC 3083-94 / BS512).